We begin with the raw amino-acid sequence, 87 residues long: MKTLLLTLVVVTIVCLDLGYTRTCLISPSSTPQTCPNGQDICFLKAQCDKFCSIRGPVIEQGCVATCPQFRSNYRSLLCCTTDNCNH.

The N-terminal stretch at 1 to 21 (MKTLLLTLVVVTIVCLDLGYT) is a signal peptide. Intrachain disulfides connect Cys-24/Cys-42, Cys-35/Cys-63, Cys-48/Cys-52, Cys-67/Cys-79, and Cys-80/Cys-85.

The protein belongs to the three-finger toxin family. Long-chain subfamily. Kappa-neurotoxin sub-subfamily. In terms of assembly, homodimer and heterodimer; non-covalently linked. In terms of tissue distribution, expressed by the venom gland.

The protein resides in the secreted. Its function is as follows. Postsynaptic neurotoxin that binds and inhibits neuronal nicotinic acetylcholine receptors (nAChR) with high affinity (IC(50)&lt;100 nM). Is a selective, and slowly reversible antagonist of alpha-3/CHRNA3-containing and some alpha-4/CHRNA4-containing AChRs. The chain is Kappa-bungarotoxin from Bungarus multicinctus (Many-banded krait).